We begin with the raw amino-acid sequence, 253 residues long: uncharacterized protein (253 aa).

This sequence belongs to the MG439/MG440 family.

This is an uncharacterized protein from Mycoplasma pneumoniae (strain ATCC 29342 / M129 / Subtype 1) (Mycoplasmoides pneumoniae).